Consider the following 268-residue polypeptide: Small ribosomal subunit protein uS2 (268 aa).

Residues 161–179 (IPCNNDKYSIALMLWMLAR) are laminin-binding.

It belongs to the universal ribosomal protein uS2 family. As to quaternary structure, component of the small ribosomal subunit. Mature ribosomes consist of a small (40S) and a large (60S) subunit. The 40S subunit contains about 33 different proteins and 1 molecule of RNA (18S). The 60S subunit contains about 49 different proteins and 3 molecules of RNA (28S, 5.8S and 5S). Interacts with ribosomal protein S21.

It localises to the cytoplasm. Required for the assembly and/or stability of the 40S ribosomal subunit. Required for the processing of the 20S rRNA-precursor to mature 18S rRNA in a late step of the maturation of 40S ribosomal subunits. Binds laminin. In Echinococcus granulosus (Hydatid tapeworm), this protein is Small ribosomal subunit protein uS2 (egmo3).